The primary structure comprises 177 residues: Acireductone dioxygenase (177 aa).

The tract at residues 1-23 is disordered; it reads MVRAWYMDDSDADQRAPHMTDPP. Positions 86, 88, 92, and 131 each coordinate Fe(2+). His-86, His-88, Glu-92, and His-131 together coordinate Ni(2+).

Belongs to the acireductone dioxygenase (ARD) family. Fe(2+) serves as cofactor. Ni(2+) is required as a cofactor.

It localises to the cytoplasm. The protein localises to the nucleus. It catalyses the reaction 1,2-dihydroxy-5-(methylsulfanyl)pent-1-en-3-one + O2 = 4-methylsulfanyl-2-oxobutanoate + formate + 2 H(+). It carries out the reaction 1,2-dihydroxy-5-(methylsulfanyl)pent-1-en-3-one + O2 = 3-(methylsulfanyl)propanoate + CO + formate + 2 H(+). The protein operates within amino-acid biosynthesis; L-methionine biosynthesis via salvage pathway; L-methionine from S-methyl-5-thio-alpha-D-ribose 1-phosphate: step 5/6. Functionally, catalyzes 2 different reactions between oxygen and the acireductone 1,2-dihydroxy-3-keto-5-methylthiopentene (DHK-MTPene) depending upon the metal bound in the active site. Fe-containing acireductone dioxygenase (Fe-ARD) produces formate and 2-keto-4-methylthiobutyrate (KMTB), the alpha-ketoacid precursor of methionine in the methionine recycle pathway. Ni-containing acireductone dioxygenase (Ni-ARD) produces methylthiopropionate, carbon monoxide and formate, and does not lie on the methionine recycle pathway. This is Acireductone dioxygenase from Branchiostoma floridae (Florida lancelet).